The following is a 491-amino-acid chain: UDP-N-acetylmuramate--L-alanine ligase (491 aa).

Position 126–132 (126–132) interacts with ATP; sequence GTHGKTT.

Belongs to the MurCDEF family.

It localises to the cytoplasm. The enzyme catalyses UDP-N-acetyl-alpha-D-muramate + L-alanine + ATP = UDP-N-acetyl-alpha-D-muramoyl-L-alanine + ADP + phosphate + H(+). The protein operates within cell wall biogenesis; peptidoglycan biosynthesis. In terms of biological role, cell wall formation. The protein is UDP-N-acetylmuramate--L-alanine ligase of Escherichia coli (strain SMS-3-5 / SECEC).